Reading from the N-terminus, the 153-residue chain is 6,7-dimethyl-8-ribityllumazine synthase (153 aa).

Residues Phe22, 56–58 (AFE), and 80–82 (AVI) each bind 5-amino-6-(D-ribitylamino)uracil. 85–86 (ST) provides a ligand contact to (2S)-2-hydroxy-3-oxobutyl phosphate. The active-site Proton donor is His88. Phe113 contributes to the 5-amino-6-(D-ribitylamino)uracil binding site. Arg127 serves as a coordination point for (2S)-2-hydroxy-3-oxobutyl phosphate.

This sequence belongs to the DMRL synthase family.

The catalysed reaction is (2S)-2-hydroxy-3-oxobutyl phosphate + 5-amino-6-(D-ribitylamino)uracil = 6,7-dimethyl-8-(1-D-ribityl)lumazine + phosphate + 2 H2O + H(+). It participates in cofactor biosynthesis; riboflavin biosynthesis; riboflavin from 2-hydroxy-3-oxobutyl phosphate and 5-amino-6-(D-ribitylamino)uracil: step 1/2. Functionally, catalyzes the formation of 6,7-dimethyl-8-ribityllumazine by condensation of 5-amino-6-(D-ribitylamino)uracil with 3,4-dihydroxy-2-butanone 4-phosphate. This is the penultimate step in the biosynthesis of riboflavin. The polypeptide is 6,7-dimethyl-8-ribityllumazine synthase (Clostridium botulinum (strain Eklund 17B / Type B)).